The following is a 333-amino-acid chain: Dihydroorotate dehydrogenase (quinone) (333 aa).

FMN-binding positions include 56 to 60 (AGLDK) and T80. K60 contributes to the substrate binding site. Position 105-109 (105-109 (NRMGF)) interacts with substrate. The FMN site is built by N133 and N166. N166 lines the substrate pocket. The active-site Nucleophile is the S169. Residue N171 coordinates substrate. K211 and T239 together coordinate FMN. 240–241 (NT) contacts substrate. FMN contacts are provided by residues G262, G291, and 312-313 (YS).

It belongs to the dihydroorotate dehydrogenase family. Type 2 subfamily. As to quaternary structure, monomer. FMN serves as cofactor.

It is found in the cell membrane. It catalyses the reaction (S)-dihydroorotate + a quinone = orotate + a quinol. It functions in the pathway pyrimidine metabolism; UMP biosynthesis via de novo pathway; orotate from (S)-dihydroorotate (quinone route): step 1/1. Catalyzes the conversion of dihydroorotate to orotate with quinone as electron acceptor. The chain is Dihydroorotate dehydrogenase (quinone) from Legionella pneumophila (strain Corby).